A 150-amino-acid polypeptide reads, in one-letter code: UPF0756 membrane protein HDEF_0364 (150 aa).

Helical transmembrane passes span 1 to 21 (MMFFSSTFFVLLLFAILGLIS), 28 to 48 (ISVVCLFFLSFIYPNLIFPWV), 51 to 71 (YALKAGILILTIAVLAPIASG), 88 to 108 (ILGILIGVFVSWLGGRGVSLM), and 123 to 143 (ILGVAFFKGVPVGPLIAAGLL).

The protein belongs to the UPF0756 family.

Its subcellular location is the cell membrane. This is UPF0756 membrane protein HDEF_0364 from Hamiltonella defensa subsp. Acyrthosiphon pisum (strain 5AT).